Reading from the N-terminus, the 654-residue chain is MTQITERELKKKYLDLLSQHFDTPEKLATEIINLESILELPKGTEHFVSDLHGEYEAFQHVLRNGSGNVRAKINDIFKDKLSTKELNDLTALVYYPEDKLQLIKCDFQNYGQLNVWYITTIEHLIQLIKYCSSKYTRSKLRRALPEQYVFIVEELLYKNNEFKNKKSYYETLVNQVIELKQADDLIIGLAYSVQRLVVDHLHVVGDIYDRGPQPDKIMDTLINYHSLDIQWGNHDVLWVGAYAGSKVCLANLLRICARYDNLDIVEDAYGINLRPLLTLAEKYYDADNPAFKPKKRPDKHERLTQREESQITKIHQAIAMIQFKLEIPVIKRRPNFEMDERLVLEKVNYDTNEITVYGKTYPLKDTCFQTVNRDNPAKLLPEEEEVMNKLLLSFQQSEKLRRHMSFLMRKGSLYLPCNGNLLIHGCIPVDENGEMESFEIDGQTYSGQELLDVFEYHVRKSFDEKENTDDLSTDLVWYLWTGKYSSLFGKRAMTTFERYFIADKASHKEEKNPYYHLREDVNMVRKMLSDFGLNPDEGRIINGHTPVKEINGEDPIKADGKMLVIDGGFSKAYQSTTGIAGYTLLYNSFGMQLVAHQQFNAKEKILSEGIDELSIKRIVDKELQRKKIRNTNKGKELQAQIDILKMLMHDRYLD.

The tract at residues 288–307 is disordered; it reads NPAFKPKKRPDKHERLTQRE. Basic and acidic residues predominate over residues 298–307; it reads DKHERLTQRE.

Belongs to the FBPase class 3 family. Requires Mn(2+) as cofactor.

The enzyme catalyses beta-D-fructose 1,6-bisphosphate + H2O = beta-D-fructose 6-phosphate + phosphate. It participates in carbohydrate biosynthesis; gluconeogenesis. In Staphylococcus aureus (strain MRSA252), this protein is Fructose-1,6-bisphosphatase class 3.